The following is a 934-amino-acid chain: Protein translocase subunit SecA (934 aa).

ATP-binding positions include Gln87, Gly105–Thr109, and Asp515. Zn(2+) contacts are provided by Cys918, Cys920, Cys929, and His930.

The protein belongs to the SecA family. Monomer and homodimer. Part of the essential Sec protein translocation apparatus which comprises SecA, SecYEG and auxiliary proteins SecDF-YajC and YidC. It depends on Zn(2+) as a cofactor.

Its subcellular location is the cell inner membrane. It localises to the cytoplasm. It carries out the reaction ATP + H2O + cellular proteinSide 1 = ADP + phosphate + cellular proteinSide 2.. Its function is as follows. Part of the Sec protein translocase complex. Interacts with the SecYEG preprotein conducting channel. Has a central role in coupling the hydrolysis of ATP to the transfer of proteins into and across the cell membrane, serving both as a receptor for the preprotein-SecB complex and as an ATP-driven molecular motor driving the stepwise translocation of polypeptide chains across the membrane. This is Protein translocase subunit SecA from Ralstonia nicotianae (strain ATCC BAA-1114 / GMI1000) (Ralstonia solanacearum).